Reading from the N-terminus, the 292-residue chain is Elongation factor Ts (292 aa).

Positions 81–84 (TDFV) are involved in Mg(2+) ion dislocation from EF-Tu.

The protein belongs to the EF-Ts family.

It localises to the cytoplasm. In terms of biological role, associates with the EF-Tu.GDP complex and induces the exchange of GDP to GTP. It remains bound to the aminoacyl-tRNA.EF-Tu.GTP complex up to the GTP hydrolysis stage on the ribosome. This Acidithiobacillus ferrooxidans (strain ATCC 23270 / DSM 14882 / CIP 104768 / NCIMB 8455) (Ferrobacillus ferrooxidans (strain ATCC 23270)) protein is Elongation factor Ts.